Here is a 117-residue protein sequence, read N- to C-terminus: Synaptobrevin homolog 1 (117 aa).

Residues 1–30 (MSSSTPFDPYALSEHDEERPQNVQSKSRTA) are disordered. Residues 1-94 (MSSSTPFDPY…MWYKDLKMKM (94 aa)) lie on the Cytoplasmic side of the membrane. Residues 28 to 88 (RTAELQAEID…NRVRKAMWYK (61 aa)) enclose the v-SNARE coiled-coil homology domain. Residue Lys63 forms a Glycyl lysine isopeptide (Lys-Gly) (interchain with G-Cter in ubiquitin) linkage. The S-palmitoyl cysteine moiety is linked to residue Cys95. Residues 95–111 (CLALVIIILLVVIIVPI) form a helical; Anchor for type IV membrane protein membrane-spanning segment. At 112–117 (AVHFSR) the chain is on the vesicular side.

Belongs to the synaptobrevin family. Post-translationally, palmitoylated by SWF1.

The protein localises to the endomembrane system. SNC1 and SNC2 are vesicle-targeting proteins essential for normal secretory traffic between the Golgi and the plasma membrane. They may also be involved in vesicle fusion. This chain is Synaptobrevin homolog 1 (SNC1), found in Saccharomyces cerevisiae (strain ATCC 204508 / S288c) (Baker's yeast).